We begin with the raw amino-acid sequence, 601 residues long: Probable serine/threonine-protein kinase WNK3 (601 aa).

Residues 34 to 291 (GRFNEILGKG…ARELLDDPFL (258 aa)) enclose the Protein kinase domain. Residues 114-117 (TELF) and lysine 164 each bind ATP. The Proton acceptor role is filled by aspartate 181. 2 disordered regions span residues 470 to 498 (GWRP…PGGA) and 551 to 601 (ADDD…SEQP). Positions 477–493 (TDDDDDDDLVGGGDDPD) are enriched in acidic residues. Over residues 560–571 (LQGSSSDTGGSN) the composition is skewed to polar residues. Basic and acidic residues predominate over residues 572–583 (HEQHAMGKDKEV).

It belongs to the protein kinase superfamily. Ser/Thr protein kinase family. WNK subfamily.

It carries out the reaction L-seryl-[protein] + ATP = O-phospho-L-seryl-[protein] + ADP + H(+). The enzyme catalyses L-threonyl-[protein] + ATP = O-phospho-L-threonyl-[protein] + ADP + H(+). The sequence is that of Probable serine/threonine-protein kinase WNK3 (WNK3) from Oryza sativa subsp. japonica (Rice).